A 538-amino-acid chain; its full sequence is Putative outer membrane porin BglH (538 aa).

An N-terminal signal peptide occupies residues 1–25 (MFRRNLITSAILLMAPLAFSAQSLA). The interval 52–82 (KDEEKKKYTPATVNRSVSTNDQGYAANPFPT) is disordered. The segment covering 62–73 (ATVNRSVSTNDQ) has biased composition (polar residues).

It belongs to the porin LamB (TC 1.B.3) family.

The protein localises to the cell outer membrane. In terms of biological role, may be a sugar porin with a broad carbohydrate specificity. The sequence is that of Putative outer membrane porin BglH (bglH) from Shigella flexneri serotype 5b (strain 8401).